The sequence spans 270 residues: Putative pyruvate, phosphate dikinase regulatory protein (270 aa).

Residue 151-158 participates in ADP binding; sequence GVSRTSKT.

It belongs to the pyruvate, phosphate/water dikinase regulatory protein family. PDRP subfamily.

The catalysed reaction is N(tele)-phospho-L-histidyl/L-threonyl-[pyruvate, phosphate dikinase] + ADP = N(tele)-phospho-L-histidyl/O-phospho-L-threonyl-[pyruvate, phosphate dikinase] + AMP + H(+). It catalyses the reaction N(tele)-phospho-L-histidyl/O-phospho-L-threonyl-[pyruvate, phosphate dikinase] + phosphate + H(+) = N(tele)-phospho-L-histidyl/L-threonyl-[pyruvate, phosphate dikinase] + diphosphate. Bifunctional serine/threonine kinase and phosphorylase involved in the regulation of the pyruvate, phosphate dikinase (PPDK) by catalyzing its phosphorylation/dephosphorylation. In Lysinibacillus sphaericus (strain C3-41), this protein is Putative pyruvate, phosphate dikinase regulatory protein.